The chain runs to 251 residues: Protein crossbronx (251 aa).

Residues 20 to 176 (QQEYKILAEY…TRENIRESLA (157 aa)) form the UBC core domain. Positions 211 to 251 (QSKHLESQSQQSNNGGNGGGGGAATGLSWVKEGEFKPLSVE) are disordered. Residues 225–234 (GGNGGGGGAA) are compositionally biased toward gly residues.

It belongs to the ubiquitin-conjugating enzyme family. FTS subfamily.

The protein is Protein crossbronx (cbx) of Drosophila willistoni (Fruit fly).